A 99-amino-acid polypeptide reads, in one-letter code: Integration host factor subunit alpha (99 aa).

Belongs to the bacterial histone-like protein family. In terms of assembly, heterodimer of an alpha and a beta chain.

Functionally, this protein is one of the two subunits of integration host factor, a specific DNA-binding protein that functions in genetic recombination as well as in transcriptional and translational control. The sequence is that of Integration host factor subunit alpha (ihfA) from Mannheimia haemolytica (Pasteurella haemolytica).